The chain runs to 160 residues: Small ribosomal subunit protein uS9 (160 aa).

Belongs to the universal ribosomal protein uS9 family.

This chain is Small ribosomal subunit protein uS9, found in Mesorhizobium japonicum (strain LMG 29417 / CECT 9101 / MAFF 303099) (Mesorhizobium loti (strain MAFF 303099)).